Consider the following 460-residue polypeptide: Mitochondrial distribution and morphology protein 34 (460 aa).

The region spanning 1–196 is the SMP-LTD domain; that stretch reads MSFKFDWESL…LPGIIHRLSQ (196 aa). A compositionally biased stretch (basic residues) spans 304 to 321; that stretch reads HNHQAPKRRTIKYKRKSK. Disordered regions lie at residues 304–356 and 368–460; these read HNHQ…PSRE and EPSS…AYSG. Low complexity-rich tracts occupy residues 330 to 355 and 393 to 405; these read STEV…TPSR and SPPS…DTSL.

Belongs to the MDM34 family. As to quaternary structure, component of the ER-mitochondria encounter structure (ERMES) or MDM complex, composed of MMM1, MDM10, MDM12 and MDM34.

The protein resides in the mitochondrion outer membrane. Functionally, component of the ERMES/MDM complex, which serves as a molecular tether to connect the endoplasmic reticulum (ER) and mitochondria. Components of this complex are involved in the control of mitochondrial shape and protein biogenesis, and function in nonvesicular lipid trafficking between the ER and mitochondria. MDM34 is required for the interaction of the ER-resident membrane protein MMM1 and the outer mitochondrial membrane-resident beta-barrel protein MDM10. The polypeptide is Mitochondrial distribution and morphology protein 34 (Yarrowia lipolytica (strain CLIB 122 / E 150) (Yeast)).